A 392-amino-acid polypeptide reads, in one-letter code: Putative cystathionine gamma-lyase (392 aa).

Residues 1 to 10 are compositionally biased toward polar residues; the sequence is MSDSATTDSA. Positions 1–41 are disordered; that stretch reads MSDSATTDSAGTGGERSASAPGDGTRAVRAGLPEPVKHEPT. Residue Lys-216 is modified to N6-(pyridoxal phosphate)lysine.

The protein belongs to the trans-sulfuration enzymes family. Requires pyridoxal 5'-phosphate as cofactor.

The protein localises to the cytoplasm. It catalyses the reaction L,L-cystathionine + H2O = 2-oxobutanoate + L-cysteine + NH4(+). The protein operates within amino-acid biosynthesis; L-cysteine biosynthesis; L-cysteine from L-homocysteine and L-serine: step 2/2. This chain is Putative cystathionine gamma-lyase (cysA), found in Streptomyces coelicolor (strain ATCC BAA-471 / A3(2) / M145).